A 773-amino-acid chain; its full sequence is Endonuclease MutS2 (773 aa).

Position 334-341 (334-341) interacts with ATP; sequence GANAGGKT. The 76-residue stretch at 698 to 773 folds into the Smr domain; that stretch reads VDLRGMRADV…GDGMTMVTLK (76 aa).

The protein belongs to the DNA mismatch repair MutS family. MutS2 subfamily. In terms of assembly, homodimer. Binds to stalled ribosomes, contacting rRNA.

Endonuclease that is involved in the suppression of homologous recombination and thus may have a key role in the control of bacterial genetic diversity. Its function is as follows. Acts as a ribosome collision sensor, splitting the ribosome into its 2 subunits. Detects stalled/collided 70S ribosomes which it binds and splits by an ATP-hydrolysis driven conformational change. Acts upstream of the ribosome quality control system (RQC), a ribosome-associated complex that mediates the extraction of incompletely synthesized nascent chains from stalled ribosomes and their subsequent degradation. Probably generates substrates for RQC. This Solidesulfovibrio magneticus (strain ATCC 700980 / DSM 13731 / RS-1) (Desulfovibrio magneticus) protein is Endonuclease MutS2.